A 566-amino-acid chain; its full sequence is Sister chromatid cohesion protein 1 (566 aa).

Serine 161 is subject to Phosphoserine. Residue serine 175 is modified to Phosphoserine; by CDC5. An N6-acetyllysine; by ECO1 modification is found at lysine 210. A Phosphoserine; by CDC5 modification is found at serine 263. Serine 307 bears the Phosphoserine mark. A disordered region spans residues 325 to 356; the sequence is SIQIDEETENSESIASSNTYKEERSNNLLTPQ. Threonine 354 carries the phosphothreonine modification.

This sequence belongs to the rad21 family. In terms of assembly, interacts directly with IRR1/SCC3 in cohesin complex. Cohesin complexes are composed of the SMC1 and SMC3 heterodimer attached via their hinge domain, MCD1/SCC1 which link them, and IRR1, which interacts with MCD1. The cohesin complex also interacts with SCC2, which is required for its association with chromosomes. In terms of processing, cleaved by ESP1 at the onset of anaphase. Post-translationally, phosphorylated by CDC5/Polo-like kinase at the onset of anaphase. Phosphorylation takes places at proximity to cleavage sites and is required for an efficient cleavage by ESP1. Acetylated by ECO1.

The protein resides in the nucleus. It localises to the chromosome. It is found in the centromere. Its function is as follows. Cleavable component of the cohesin complex involved in chromosome cohesion during cell cycle. The cohesin complex is required for the cohesion of sister chromatids after DNA replication. The cohesin complex apparently forms a large proteinaceous ring within which sister chromatids can be trapped. At metaphase-anaphase transition, this protein is cleaved by ESP1 and dissociates from chromatin, allowing sister chromatids to segregate. The protein is Sister chromatid cohesion protein 1 (MCD1) of Saccharomyces cerevisiae (strain ATCC 204508 / S288c) (Baker's yeast).